We begin with the raw amino-acid sequence, 430 residues long: Enolase (430 aa).

Q163 is a binding site for (2R)-2-phosphoglycerate. The active-site Proton donor is the E205. Mg(2+) contacts are provided by D242, E287, and D314. K339, R368, S369, and K390 together coordinate (2R)-2-phosphoglycerate. The active-site Proton acceptor is K339.

The protein belongs to the enolase family. Mg(2+) serves as cofactor.

It localises to the cytoplasm. It is found in the secreted. The protein localises to the cell surface. It catalyses the reaction (2R)-2-phosphoglycerate = phosphoenolpyruvate + H2O. It functions in the pathway carbohydrate degradation; glycolysis; pyruvate from D-glyceraldehyde 3-phosphate: step 4/5. Catalyzes the reversible conversion of 2-phosphoglycerate (2-PG) into phosphoenolpyruvate (PEP). It is essential for the degradation of carbohydrates via glycolysis. The chain is Enolase from Listeria innocua serovar 6a (strain ATCC BAA-680 / CLIP 11262).